A 512-amino-acid polypeptide reads, in one-letter code: Vacuolar protein sorting-associated protein 30 (512 aa).

Residues 294 to 511 are BARA; sequence TNIYNESFRI…LVFCSSKLSL (218 aa).

It belongs to the beclin family. As to quaternary structure, component of the autophagy-specific VPS34 PI3-kinase complex I composed of VPS15, VPS30, VPS34, ATG14 and ATG38; and of the VPS34 PI3-kinase complex II composed of VPS15, VPS30, VPS34 and VPS38.

The protein resides in the endosome membrane. It is found in the vacuole membrane. The protein localises to the preautophagosomal structure membrane. Its function is as follows. Required for cytoplasm to vacuole transport (Cvt), autophagy, nucleophagy, and mitophagy, as a part of the autophagy-specific VPS34 PI3-kinase complex I. This complex is essential to recruit the ATG8-phosphatidylinositol conjugate and the ATG12-ATG5 conjugate to the pre-autophagosomal structure. Also involved in endosome-to-Golgi retrograde transport as part of the VPS34 PI3-kinase complex II. This second complex is required for the endosome-to-Golgi retrieval of PEP1 and KEX2, and the recruitment of VPS5 and VPS7, two components of the retromer complex, to endosomal membranes (probably through the synthesis of a specific pool of phosphatidylinositol 3-phosphate recruiting the retromer to the endosomes). Required for survival and/or proliferation in kidneys but not brain. This Candida glabrata (strain ATCC 2001 / BCRC 20586 / JCM 3761 / NBRC 0622 / NRRL Y-65 / CBS 138) (Yeast) protein is Vacuolar protein sorting-associated protein 30.